We begin with the raw amino-acid sequence, 203 residues long: Glycerol-3-phosphate acyltransferase (203 aa).

4 helical membrane passes run 4 to 24, 80 to 100, 117 to 137, and 139 to 159; these read MAVTMTIIAYLLGSISSAVLI, PVLLGVIAIAACLGHMYPLFF, PIGLDLTGMIMATWLLVAILF, and YSSLAALVTVLLAPMYTWMIK.

Belongs to the PlsY family. Probably interacts with PlsX.

The protein resides in the cell inner membrane. The catalysed reaction is an acyl phosphate + sn-glycerol 3-phosphate = a 1-acyl-sn-glycero-3-phosphate + phosphate. Its pathway is lipid metabolism; phospholipid metabolism. Functionally, catalyzes the transfer of an acyl group from acyl-phosphate (acyl-PO(4)) to glycerol-3-phosphate (G3P) to form lysophosphatidic acid (LPA). This enzyme utilizes acyl-phosphate as fatty acyl donor, but not acyl-CoA or acyl-ACP. This is Glycerol-3-phosphate acyltransferase from Vibrio vulnificus (strain YJ016).